The following is a 207-amino-acid chain: Dephospho-CoA kinase (207 aa).

The DPCK domain maps to 11-207 (RIGLTGGIAS…LLKMSPTAEL (197 aa)). 19-24 (ASGKSS) is a binding site for ATP.

It belongs to the CoaE family.

The protein localises to the cytoplasm. The catalysed reaction is 3'-dephospho-CoA + ATP = ADP + CoA + H(+). It functions in the pathway cofactor biosynthesis; coenzyme A biosynthesis; CoA from (R)-pantothenate: step 5/5. Functionally, catalyzes the phosphorylation of the 3'-hydroxyl group of dephosphocoenzyme A to form coenzyme A. The chain is Dephospho-CoA kinase from Synechococcus sp. (strain CC9605).